We begin with the raw amino-acid sequence, 597 residues long: MFASCHCVPRGRRTMKMIHFRSSSVKSLSQEMRCTIRLLDDSEISCHIQRETKGQFLIDHICNYYSLLEKDYFGIRYVDPEKQRHWLEPNKSIFKQMKTHPPYTMCFRVKFYPHEPLKIKEELTRYLLYLQIKRDIFHGRLLCSFSDAAYLGACIVQAELGDYDPDEHPENYISEFEIFPKQSQKLERKIVEIHKNELRGQSPPVAEFNLLLKAHTLETYGVDPHPCKDSTGTTTFLGFTAAGFVVFQGNKRIHLIKWPDVCKLKFEGKTFYVIGTQKEKKAMLAFHTSTPAACKHLWKCGVENQAFYKYAKSSQIKTVSSSKIFFKGSRFRYSGKVAKEVVEASSKIQREPPEVHRANITQSRSSHSLNKQLIINMEPLQPLLPSPSEQEEELPLGEGVPLPKEENISAPLISSSPVKAAREYEDPPSEEEDKIKEEPLTISELVYNPSASLLPTPVDDDEIDMLFDCPSRLELEREDTDSFEDLEADENAFLIAEEEELKEARRALSWSYDILTGHIRVNPLVKSFSRLLVVGLGLLLFVFPLLLLLLESGIDLSFLCEIRQTPEFEQFHYEYYCPLKEWVAGKVHLILYMLGCS.

Residues 32 to 312 (MRCTIRLLDD…ENQAFYKYAK (281 aa)) form the FERM domain. Positions 383 to 403 (LLPSPSEQEEELPLGEGVPLP) are disordered. The chain crosses the membrane as a helical span at residues 531-551 (LLVVGLGLLLFVFPLLLLLLE).

Ovary-specific.

It is found in the membrane. Functionally, putative tumor suppressor gene that may be implicated in the origin and progression of lung cancer. In Homo sapiens (Human), this protein is FERM domain-containing protein 3 (FRMD3).